We begin with the raw amino-acid sequence, 474 residues long: Vasculin-like protein 1 (474 aa).

Positions 17 to 42 are disordered; the sequence is QSAKSPTATFEKHGEHLPRGEGRFGV. Basic and acidic residues predominate over residues 26–38; that stretch reads FEKHGEHLPRGEG. Phosphoserine is present on residues Ser-49 and Ser-76. The disordered stretch occupies residues 91-191; that stretch reads GNPSGWHSSS…VWENPPSAKQ (101 aa). Residues 116–128 are compositionally biased toward basic residues; sequence NHRHWNGSFHSRK. Basic and acidic residues predominate over residues 136–154; the sequence is PPMEIREEKKEDKVEKLQF. Ser-202 carries the post-translational modification Phosphoserine. The tract at residues 238 to 371 is disordered; the sequence is LVPKPVPPPS…EEGCHQNGLA (134 aa). The segment covering 262-277 has biased composition (polar residues); sequence GSLSSSRESAFTSPIS. Low complexity predominate over residues 291–312; that stretch reads SSPKESPSSTTPPIEISSSRLT. At Ser-292 the chain carries Phosphoserine. A Phosphothreonine modification is found at Thr-301. 2 stretches are compositionally biased toward basic and acidic residues: residues 317 to 346 and 356 to 365; these read RTTD…CDKL and EPKENGEEGC. Phosphoserine is present on Ser-382. The disordered stretch occupies residues 453–474; sequence AEFEDSDTETSSSETSDDDAWK.

The protein belongs to the vasculin family.

Its subcellular location is the nucleus. In terms of biological role, possible transcription factor. In Homo sapiens (Human), this protein is Vasculin-like protein 1 (GPBP1L1).